We begin with the raw amino-acid sequence, 123 residues long: Late histone H2B.L1 (123 aa).

The span at 1-10 shows a compositional bias: low complexity; the sequence is MPAKAQPAGK. The segment at 1 to 33 is disordered; the sequence is MPAKAQPAGKKGSKKAKAPRPSGGKKRRRRRKE. Basic residues predominate over residues 11-32; the sequence is KGSKKAKAPRPSGGKKRRRRRK. O-linked (GlcNAc) serine glycosylation is present at S110. K118 is covalently cross-linked (Glycyl lysine isopeptide (Lys-Gly) (interchain with G-Cter in ubiquitin)).

The protein belongs to the histone H2B family. In terms of assembly, the nucleosome is a histone octamer containing two molecules each of H2A, H2B, H3 and H4 assembled in one H3-H4 heterotetramer and two H2A-H2B heterodimers. The octamer wraps approximately 147 bp of DNA. Post-translationally, monoubiquitination of Lys-118 gives a specific tag for epigenetic transcriptional activation and is also prerequisite for histone H3 'Lys-4' and 'Lys-79' methylation. In terms of processing, glcNAcylation at Ser-110 promotes monoubiquitination of Lys-118. It fluctuates in response to extracellular glucose, and associates with transcribed genes.

Its subcellular location is the nucleus. It is found in the chromosome. Its function is as follows. Core component of nucleosome. Nucleosomes wrap and compact DNA into chromatin, limiting DNA accessibility to the cellular machineries which require DNA as a template. Histones thereby play a central role in transcription regulation, DNA repair, DNA replication and chromosomal stability. DNA accessibility is regulated via a complex set of post-translational modifications of histones, also called histone code, and nucleosome remodeling. The chain is Late histone H2B.L1 from Strongylocentrotus purpuratus (Purple sea urchin).